The primary structure comprises 626 residues: E3 ubiquitin-protein ligase HRD1 (626 aa).

The N-terminal stretch at 1-15 (MQLLLSSVCMALTSA) is a signal peptide. Residues 16 to 38 (VIGFAYYQKQQFYPAVVYITKSN) are Lumenal-facing. Residues 39–59 (ASMGVIYIQFFVIVFMFGKLL) form a helical membrane-spanning segment. At 60–96 (SKIFLGTLRAAEFEHLLERFWYALTETCLAFTVFRDD) the chain is on the cytoplasmic side. The helical transmembrane segment at 97–117 (FNPRFVALFTVLLFLKSFHWL) threads the bilayer. Residues 118-128 (AEERVDFMERS) lie on the Lumenal side of the membrane. Residues 129–149 (PVLGWLFHIRVGSLLTVLGIL) form a helical membrane-spanning segment. The Cytoplasmic portion of the chain corresponds to 150 to 167 (DYVLLIHAYNSTLVRGPT). The chain crosses the membrane as a helical span at residues 168–188 (VQLVFGFEYAILLTVIASTAI). Topologically, residues 189–222 (KYVLHAAEMRTDTPWENKAVFLLYTELVIGLIKV) are lumenal. Residues 223–243 (VLYILFVVIMAKIYALPMFVF) form a helical membrane-spanning segment. An interaction with p53/TP53 region spans residues 234 to 268 (KIYALPMFVFRPMFFTIRNFRKALNDVIMSRRAIR). Topologically, residues 244 to 626 (RPMFFTIRNF…AATNERTTAE (383 aa)) are cytoplasmic. Residues 289-328 (CIICREDMVNHSKKLPCGHIFHTTCLRSWFQRQQTCPTCR) form an RING-type; atypical zinc finger. The interval 569–600 (DADEDDIPSTATEAVSIPNSDADFEENSSELG) is disordered. Over residues 577 to 587 (STATEAVSIPN) the composition is skewed to polar residues.

It belongs to the HRD1 family. Homodimer. Interacts with p53. May interact with Septin2.

The protein localises to the endoplasmic reticulum membrane. The catalysed reaction is S-ubiquitinyl-[E2 ubiquitin-conjugating enzyme]-L-cysteine + [acceptor protein]-L-lysine = [E2 ubiquitin-conjugating enzyme]-L-cysteine + N(6)-ubiquitinyl-[acceptor protein]-L-lysine.. The protein operates within protein modification; protein ubiquitination. Functionally, acts as an E3 ubiquitin-protein ligase which accepts ubiquitin specifically from endoplasmic reticulum-associated UBC7 E2 ligase and transfers it to substrates, promoting their degradation. Component of the endoplasmic reticulum quality control (ERQC) system also called ER-associated degradation (ERAD) involved in ubiquitin-dependent degradation of misfolded endoplasmic reticulum proteins. Also promotes the degradation of normal but naturally short-lived proteins. Protects cells from ER stress-induced apoptosis. Sequesters p53 in the cytoplasm and promotes its degradation, thereby negatively regulating its biological function in transcription, cell cycle regulation and apoptosis. The protein is E3 ubiquitin-protein ligase HRD1 (sip3) of Drosophila melanogaster (Fruit fly).